The chain runs to 263 residues: Acyl-[acyl-carrier-protein]--UDP-N-acetylglucosamine O-acyltransferase (263 aa).

It belongs to the transferase hexapeptide repeat family. LpxA subfamily. Homotrimer.

Its subcellular location is the cytoplasm. It catalyses the reaction a (3R)-hydroxyacyl-[ACP] + UDP-N-acetyl-alpha-D-glucosamine = a UDP-3-O-[(3R)-3-hydroxyacyl]-N-acetyl-alpha-D-glucosamine + holo-[ACP]. Its pathway is glycolipid biosynthesis; lipid IV(A) biosynthesis; lipid IV(A) from (3R)-3-hydroxytetradecanoyl-[acyl-carrier-protein] and UDP-N-acetyl-alpha-D-glucosamine: step 1/6. Functionally, involved in the biosynthesis of lipid A, a phosphorylated glycolipid that anchors the lipopolysaccharide to the outer membrane of the cell. This is Acyl-[acyl-carrier-protein]--UDP-N-acetylglucosamine O-acyltransferase from Xanthomonas campestris pv. campestris (strain 8004).